The following is a 564-amino-acid chain: Probable metalloprotease ARX1 (564 aa).

The protein belongs to the peptidase M24 family. Component of the nucleoplasmic and cytoplasmic pre-60S ribosomal particles.

The protein resides in the cytoplasm. Its subcellular location is the nucleus. Functionally, probable metalloprotease involved in proper assembly of pre-ribosomal particles during the biogenesis of the 60S ribosomal subunit. Accompanies the pre-60S particles to the cytoplasm. In Debaryomyces hansenii (strain ATCC 36239 / CBS 767 / BCRC 21394 / JCM 1990 / NBRC 0083 / IGC 2968) (Yeast), this protein is Probable metalloprotease ARX1 (ARX1).